The chain runs to 412 residues: Probable beta-1,4-xylosyltransferase IRX10 (412 aa).

Residues 1–21 (MKIHSCLSAILLFLFFSASSA) form a helical; Signal-anchor for type II membrane protein membrane-spanning segment. Topologically, residues 22 to 412 (KQNVRTERIS…AGPVADLKPW (391 aa)) are lumenal. N-linked (GlcNAc...) asparagine glycosylation is found at N139 and N400.

The protein belongs to the glycosyltransferase 47 family. Limited to xylem cells. Expressed in the root tip, xylem cells of roots, and in the vasculature of roots, cotyledons and leaves.

The protein localises to the golgi apparatus membrane. Involved in the synthesis of the hemicellulose glucuronoxylan, a major component of secondary cell walls. Probably involved in the elongation of glucuronoxylan xylosyl backbone, especially in the formation of GlcUA side chain of xylans. This is Probable beta-1,4-xylosyltransferase IRX10 (IRX10) from Arabidopsis thaliana (Mouse-ear cress).